The sequence spans 89 residues: Small ribosomal subunit protein uS15 (89 aa).

It belongs to the universal ribosomal protein uS15 family. In terms of assembly, part of the 30S ribosomal subunit. Forms a bridge to the 50S subunit in the 70S ribosome, contacting the 23S rRNA.

One of the primary rRNA binding proteins, it binds directly to 16S rRNA where it helps nucleate assembly of the platform of the 30S subunit by binding and bridging several RNA helices of the 16S rRNA. Its function is as follows. Forms an intersubunit bridge (bridge B4) with the 23S rRNA of the 50S subunit in the ribosome. This chain is Small ribosomal subunit protein uS15, found in Lactiplantibacillus plantarum (strain ATCC BAA-793 / NCIMB 8826 / WCFS1) (Lactobacillus plantarum).